Reading from the N-terminus, the 236-residue chain is Pyridoxal phosphate homeostasis protein (236 aa).

N6-(pyridoxal phosphate)lysine is present on K36.

It belongs to the pyridoxal phosphate-binding protein YggS/PROSC family.

Its function is as follows. Pyridoxal 5'-phosphate (PLP)-binding protein, which is involved in PLP homeostasis. This chain is Pyridoxal phosphate homeostasis protein, found in Vibrio cholerae serotype O1 (strain ATCC 39315 / El Tor Inaba N16961).